The chain runs to 283 residues: Acetylglutamate kinase (283 aa).

Residues 63–64 (GG), Arg-85, and Asn-178 each bind substrate.

The protein belongs to the acetylglutamate kinase family. ArgB subfamily.

The protein resides in the plastid. The protein localises to the chloroplast. The catalysed reaction is N-acetyl-L-glutamate + ATP = N-acetyl-L-glutamyl 5-phosphate + ADP. The protein operates within amino-acid biosynthesis; L-arginine biosynthesis; N(2)-acetyl-L-ornithine from L-glutamate: step 2/4. Catalyzes the ATP-dependent phosphorylation of N-acetyl-L-glutamate. This chain is Acetylglutamate kinase, found in Porphyra purpurea (Red seaweed).